The chain runs to 379 residues: MRVLGLMSGTSADGVDAVLAEFSGSPSEPKWSLLNLVCTPYPEDLRQTVINAGQGITLNSREWLELSESITEVHAQAALACDPSAQAELVGSHGQTVWHRPPQKNHRGASWQILQAPLLAELLKRPVVHDFRAADLALGGQGAPLVPMADAALLGRVGGWRGVLNLGGIANLTLIPPRSGPDRRASVMGWDCGPANSLIDLAVEQISKGKLAFDHDGSIAASGHPHTTTIERWLKEAFFQLPPPKSTGREQFGLADLEQRLKELPKLSTANRVATLTAFSAAVVAQDLNNLRIRNLVRPLELIVAGGGSRNPVLMNELRQRCRGMRVLNSDELGLSAEAREGLAFALLAWWHCLQHPGNAPAITGAKRAAVLGVRADPA.

An ATP-binding site is contributed by 9–16 (GTSADGVD).

This sequence belongs to the anhydro-N-acetylmuramic acid kinase family.

It catalyses the reaction 1,6-anhydro-N-acetyl-beta-muramate + ATP + H2O = N-acetyl-D-muramate 6-phosphate + ADP + H(+). It participates in amino-sugar metabolism; 1,6-anhydro-N-acetylmuramate degradation. It functions in the pathway cell wall biogenesis; peptidoglycan recycling. In terms of biological role, catalyzes the specific phosphorylation of 1,6-anhydro-N-acetylmuramic acid (anhMurNAc) with the simultaneous cleavage of the 1,6-anhydro ring, generating MurNAc-6-P. Is required for the utilization of anhMurNAc either imported from the medium or derived from its own cell wall murein, and thus plays a role in cell wall recycling. The protein is Anhydro-N-acetylmuramic acid kinase of Prochlorococcus marinus (strain MIT 9303).